Here is a 155-residue protein sequence, read N- to C-terminus: Ribonuclease H (155 aa).

The region spanning 1–142 is the RNase H type-1 domain; that stretch reads MLKQVEIFTD…CDELARAAAM (142 aa). Positions 10, 48, 70, and 134 each coordinate Mg(2+).

The protein belongs to the RNase H family. As to quaternary structure, monomer. Requires Mg(2+) as cofactor.

The protein resides in the cytoplasm. It carries out the reaction Endonucleolytic cleavage to 5'-phosphomonoester.. In terms of biological role, endonuclease that specifically degrades the RNA of RNA-DNA hybrids. This chain is Ribonuclease H, found in Citrobacter koseri (strain ATCC BAA-895 / CDC 4225-83 / SGSC4696).